A 165-amino-acid polypeptide reads, in one-letter code: uncharacterized protein (165 aa).

The chain crosses the membrane as a helical span at residues 4–26 (FVIGTMIALAGLLVGGGVGSYFT).

It is found in the membrane. This is an uncharacterized protein from Aquifex aeolicus (strain VF5).